Reading from the N-terminus, the 377-residue chain is Alternative oxidase, mitochondrial (377 aa).

The chain crosses the membrane as a helical span at residues 149–169; the sequence is LSRFIFLESIAAVPGMVAGML. Glu-156, Glu-195, and His-198 together coordinate Fe cation. A helical transmembrane segment spans residues 214-234; that stretch reads ILIIGAQGVYFNAMFVAYLIS. 3 residues coordinate Fe cation: Glu-246, Glu-303, and His-306.

The protein belongs to the alternative oxidase family. Fe cation serves as cofactor.

The protein resides in the mitochondrion inner membrane. Catalyzes cyanide-resistant oxygen consumption. May increase respiration when the cytochrome respiratory pathway is restricted, or in response to low temperatures. In Pyricularia oryzae (strain 70-15 / ATCC MYA-4617 / FGSC 8958) (Rice blast fungus), this protein is Alternative oxidase, mitochondrial (AOX1).